The primary structure comprises 157 residues: Deoxyuridine 5'-triphosphate nucleotidohydrolase (157 aa).

Substrate contacts are provided by residues 76–78, Asn89, 93–95, and Lys103; these read RSG and TID.

The protein belongs to the dUTPase family. It depends on Mg(2+) as a cofactor.

The catalysed reaction is dUTP + H2O = dUMP + diphosphate + H(+). It participates in pyrimidine metabolism; dUMP biosynthesis; dUMP from dCTP (dUTP route): step 2/2. Its function is as follows. This enzyme is involved in nucleotide metabolism: it produces dUMP, the immediate precursor of thymidine nucleotides and it decreases the intracellular concentration of dUTP so that uracil cannot be incorporated into DNA. The sequence is that of Deoxyuridine 5'-triphosphate nucleotidohydrolase from Brucella abortus (strain 2308).